Here is a 58-residue protein sequence, read N- to C-terminus: MRYYGSYYRGLGYGCGGFGGLGYGCGCGGYRYGSGYGGYRYGCCRPSCREGYGFSGFY.

It belongs to the KRTAP type 19 family. As to quaternary structure, interacts with hair keratins.

Functionally, in the hair cortex, hair keratin intermediate filaments are embedded in an interfilamentous matrix, consisting of hair keratin-associated proteins (KRTAP), which are essential for the formation of a rigid and resistant hair shaft through their extensive disulfide bond cross-linking with abundant cysteine residues of hair keratins. The matrix proteins include the high-sulfur and high-glycine-tyrosine keratins. In Homo sapiens (Human), this protein is Keratin-associated protein 19-6 (KRTAP19-6).